The chain runs to 167 residues: MKTNCEFPLLCLLIVLVANVEGEVEDTGLKMVKRLWRNWEDPEQRQLLDQETELEKQREKRLWRNWEDLELRQLLNEFAENQREKRLWRNWERRQVANEDDGEKAKELWRNWEDLKRRQVADLNDEQETQRDKRLWRNWEDNHATLRKRSADSLSRQKRLGKERGKE.

The N-terminal stretch at 1 to 22 (MKTNCEFPLLCLLIVLVANVEG) is a signal peptide. Positions 23–94 (EVEDTGLKMV…KRLWRNWERR (72 aa)) are excised as a propeptide. 3 RLWRNWE repeats span residues 34–40 (RLWRNWE), 61–67 (RLWRNWE), and 86–92 (RLWRNWE). The residue at position 95 (Gln95) is a Pyrrolidone carboxylic acid. An RLWRNWE 4; approximate repeat occupies 107–113 (ELWRNWE). A propeptide spanning residues 112 to 118 (WEDLKRR) is cleaved from the precursor. The residue at position 119 (Gln119) is a Pyrrolidone carboxylic acid. One copy of the RLWRNWE 5 repeat lies at 134 to 140 (RLWRNWE). The propeptide occupies 139-167 (WEDNHATLRKRSADSLSRQKRLGKERGKE). A disordered region spans residues 147–167 (RKRSADSLSRQKRLGKERGKE).

The protein belongs to the scoloptoxin-08 family. Expressed by the venom gland.

It localises to the secreted. The polypeptide is U-scoloptoxin(08)-Er5b (Ethmostigmus rubripes (Giant centipede)).